The following is a 307-amino-acid chain: Taste receptor type 2 member 10 (307 aa).

Topologically, residues 1 to 6 (MLSVVE) are extracellular. A helical membrane pass occupies residues 7–27 (GILILVVISESVFGVLGNGFI). At 28–42 (GLVNCIDCAKNKLST) the chain is on the cytoplasmic side. A helical membrane pass occupies residues 43–63 (IGFILTGLAISRIFLIWIIIT). Over 64–100 (DGFIQIFSPDVYASGNLIEYISYFWVITNQSSIWFAT) the chain is Extracellular. The N-linked (GlcNAc...) asparagine glycan is linked to Asn92. Residues 101-121 (SLSIFYFLKIANFSNYIFLWL) form a helical membrane-spanning segment. At 122 to 126 (KSRIN) the chain is on the cytoplasmic side. The helical transmembrane segment at 127–147 (RVLPLLMGFLLISCLLNFAYI) threads the bilayer. The Extracellular segment spans residues 148–179 (VKILNDLKMKNDTVWRLNMYKSEYFIKQLLLN). A glycan (N-linked (GlcNAc...) asparagine) is linked at Asn158. The chain crosses the membrane as a helical span at residues 180 to 200 (LGVIFFFTLSLITSVLLIISL). The Cytoplasmic portion of the chain corresponds to 201 to 227 (WRHNRQMQSNVTGLRDSITEAHVKAMK). A helical transmembrane segment spans residues 228–248 (VLISFIILFILYFIGIAIEIS). The Extracellular segment spans residues 249–257 (YFTVPENKL). The chain crosses the membrane as a helical span at residues 258 to 278 (LLIFGMTTTAIYPWGHSFILI). Over 279 to 307 (LGNSKLKQASLRVLQQLKCCEERKNLRAT) the chain is Cytoplasmic.

Belongs to the G-protein coupled receptor T2R family.

It is found in the membrane. Its function is as follows. Receptor that may play a role in the perception of bitterness and is gustducin-linked. May play a role in sensing the chemical composition of the gastrointestinal content. The activity of this receptor may stimulate alpha gustducin, mediate PLC-beta-2 activation and lead to the gating of TRPM5. This is Taste receptor type 2 member 10 (TAS2R10) from Papio hamadryas (Hamadryas baboon).